Here is a 616-residue protein sequence, read N- to C-terminus: Homeodomain-interacting protein kinase 4 (616 aa).

Residues 11–347 (YDIIEVLGKG…PSAALRHPFV (337 aa)) form the Protein kinase domain. Residues 17–25 (LGKGTFGEV) and lysine 40 each bind ATP. Aspartate 136 acts as the Proton acceptor in catalysis. The tract at residues 487–616 (HKARKAPAGS…SFLQHVGGHH (130 aa)) is disordered. Over residues 497–512 (KSDSNFSNLIRLSQAS) the composition is skewed to polar residues. The residue at position 512 (serine 512) is a Phosphoserine. Positions 542–560 (REGDGPGIKDRPMDAERPG) are enriched in basic and acidic residues.

The protein belongs to the protein kinase superfamily. CMGC Ser/Thr protein kinase family. HIPK subfamily. In terms of processing, autophosphorylated. Expressed at moderate levels in lung and white adipose tissues and weakly in brain and liver.

Its subcellular location is the cytoplasm. The enzyme catalyses L-seryl-[protein] + ATP = O-phospho-L-seryl-[protein] + ADP + H(+). It carries out the reaction L-threonyl-[protein] + ATP = O-phospho-L-threonyl-[protein] + ADP + H(+). Functionally, protein kinase that phosphorylates murine TP53 at Ser-9, and thus induces TP53 repression of BIRC5 promoter. May act as a corepressor of transcription factors (Potential). This Mus musculus (Mouse) protein is Homeodomain-interacting protein kinase 4 (Hipk4).